A 192-amino-acid polypeptide reads, in one-letter code: Putative manganese efflux pump MntP (192 aa).

Helical transmembrane passes span phenylalanine 3–alanine 23, valine 36–leucine 56, valine 65–leucine 85, phenylalanine 112–leucine 132, phenylalanine 136–phenylalanine 156, and leucine 171–leucine 191.

Belongs to the MntP (TC 9.B.29) family.

Its subcellular location is the cell inner membrane. Probably functions as a manganese efflux pump. The sequence is that of Putative manganese efflux pump MntP from Sorangium cellulosum (strain So ce56) (Polyangium cellulosum (strain So ce56)).